The following is an 81-amino-acid chain: Trefoil factor 1 (81 aa).

An N-terminal signal peptide occupies residues 1–21 (MEHKVTCVLAMVLMLALSSLA). The residue at position 22 (Gln22) is a Pyrrolidone carboxylic acid. Residues 26–69 (ETCAVIPRERINCGFPGVTAQQCKEKGCCFDDSVRGFPWCFRPL) form the P-type domain. Intrachain disulfides connect Cys28/Cys54, Cys38/Cys53, and Cys48/Cys65.

It localises to the secreted. In terms of biological role, stabilizer of the mucous gel overlying the gastrointestinal mucosa that provides a physical barrier against various noxious agents. This is Trefoil factor 1 (Tff1) from Rattus norvegicus (Rat).